The sequence spans 399 residues: G2/mitotic-specific cyclin-B2 (399 aa).

The interval 58–78 is disordered; sequence PVKATKGPGKMTNTVVPPKPP.

The protein belongs to the cyclin family. Cyclin AB subfamily. As to quaternary structure, interacts with the CDK1 protein kinase to form a serine/threonine kinase holoenzyme complex also known as maturation promoting factor (MPF). The cyclin subunit imparts substrate specificity to the complex.

Its function is as follows. Essential for the control of the cell cycle at the G2/M (mitosis) transition. The sequence is that of G2/mitotic-specific cyclin-B2 (CCNB2) from Gallus gallus (Chicken).